A 233-amino-acid chain; its full sequence is GSK-3-binding protein FRAT2 (233 aa).

The segment at 1 to 24 (MPCRREEEEEAGEEAEGEEEEDDS) is disordered. Residues 7–24 (EEEEAGEEAEGEEEEDDS) are compositionally biased toward acidic residues. Residues 174–196 (DPHRLLQQLVLSGNLIKEAVRRL) form an involved in GSK-3 binding region. The disordered stretch occupies residues 204–233 (AATGPASAPGPGGGRSGPDRIALQPSGSLL).

The protein belongs to the GSK-3-binding protein family. As to quaternary structure, binds GSK-3 and prevents GSK-3-dependent phosphorylation.

In terms of biological role, positively regulates the Wnt signaling pathway by stabilizing beta-catenin through the association with GSK-3. This is GSK-3-binding protein FRAT2 (FRAT2) from Homo sapiens (Human).